We begin with the raw amino-acid sequence, 334 residues long: Phosphoribosylformylglycinamidine cyclo-ligase (334 aa).

This sequence belongs to the AIR synthase family.

The protein resides in the cytoplasm. The enzyme catalyses 2-formamido-N(1)-(5-O-phospho-beta-D-ribosyl)acetamidine + ATP = 5-amino-1-(5-phospho-beta-D-ribosyl)imidazole + ADP + phosphate + H(+). Its pathway is purine metabolism; IMP biosynthesis via de novo pathway; 5-amino-1-(5-phospho-D-ribosyl)imidazole from N(2)-formyl-N(1)-(5-phospho-D-ribosyl)glycinamide: step 2/2. The sequence is that of Phosphoribosylformylglycinamidine cyclo-ligase from Pyrococcus abyssi (strain GE5 / Orsay).